We begin with the raw amino-acid sequence, 1296 residues long: Protein broad-minded (1296 aa).

In terms of domain architecture, Rab-GAP TBC spans 1158–1281; sequence GIHPIYFCSA…YMENLEQNYR (124 aa).

Interacts with CDK20, which promotes CDK20 stability and function. Interacts with FAM149B1; may play a role in cilium assembly.

The protein localises to the cytoplasm. It is found in the cell projection. The protein resides in the cilium. Required for high-level Shh responses in the developing neural tube. Together with CDK20, controls the structure of the primary cilium by coordinating assembly of the ciliary membrane and axoneme, allowing GLI2 to be properly activated in response to Shh signaling. This chain is Protein broad-minded (Tbc1d32), found in Mus musculus (Mouse).